A 542-amino-acid chain; its full sequence is Sensory neuron membrane protein 2 (542 aa).

At 1 to 487 (MMVMNTELRQ…MKVLTLLDIV (487 aa)) the chain is on the extracellular side. 4 N-linked (GlcNAc...) asparagine glycosylation sites follow: Asn33, Asn128, Asn238, and Asn274. Cystine bridges form between Cys283–Cys351, Cys312–Cys378, and Cys353–Cys367. A helical membrane pass occupies residues 488 to 508 (QWVMIGSGLLLAIIMPIVYFI). Residues 509–542 (KRRPSSGSITPTLTTTTSTVSISDGGGLGGNPQK) lie on the Cytoplasmic side of the membrane.

This sequence belongs to the CD36 family. Detected in the antenna, legs and wings. Higher levels of expression detected in male compared to female.

The protein localises to the cell membrane. In terms of biological role, plays an olfactory role that is not restricted to pheromone sensitivity. The protein is Sensory neuron membrane protein 2 of Aedes aegypti (Yellowfever mosquito).